The chain runs to 225 residues: uncharacterized protein (225 aa).

This is an uncharacterized protein from Methanocaldococcus jannaschii (strain ATCC 43067 / DSM 2661 / JAL-1 / JCM 10045 / NBRC 100440) (Methanococcus jannaschii).